We begin with the raw amino-acid sequence, 228 residues long: UPF0758 protein CLK_2387 (228 aa).

One can recognise an MPN domain in the interval 106–228 (KISTPLDVSN…YVSMKEKGTI (123 aa)). Zn(2+) contacts are provided by H177, H179, and D190. The JAMM motif motif lies at 177 to 190 (HNHPSGDPTPSKED).

It belongs to the UPF0758 family.

This is UPF0758 protein CLK_2387 from Clostridium botulinum (strain Loch Maree / Type A3).